The sequence spans 161 residues: SsrA-binding protein (161 aa).

It belongs to the SmpB family.

Its subcellular location is the cytoplasm. Its function is as follows. Required for rescue of stalled ribosomes mediated by trans-translation. Binds to transfer-messenger RNA (tmRNA), required for stable association of tmRNA with ribosomes. tmRNA and SmpB together mimic tRNA shape, replacing the anticodon stem-loop with SmpB. tmRNA is encoded by the ssrA gene; the 2 termini fold to resemble tRNA(Ala) and it encodes a 'tag peptide', a short internal open reading frame. During trans-translation Ala-aminoacylated tmRNA acts like a tRNA, entering the A-site of stalled ribosomes, displacing the stalled mRNA. The ribosome then switches to translate the ORF on the tmRNA; the nascent peptide is terminated with the 'tag peptide' encoded by the tmRNA and targeted for degradation. The ribosome is freed to recommence translation, which seems to be the essential function of trans-translation. This is SsrA-binding protein from Desulforamulus reducens (strain ATCC BAA-1160 / DSM 100696 / MI-1) (Desulfotomaculum reducens).